The following is a 757-amino-acid chain: RNA-directed RNA polymerase catalytic subunit (757 aa).

Residues 53–82 are disordered; that stretch reads GRWTKNTETGAPQLNPIDGPLPKDNEPSGY. 2 consecutive short sequence motifs (nuclear localization signal) follow at residues 187-195 and 203-216; these read RKRRVRDNV and RTIGKKKHRLNKRS. The tract at residues 249–256 is promoter-binding site; it reads RGFVYFVE. One can recognise a RdRp catalytic domain in the interval 286-483; that stretch reads VRKMMTNSQD…GINMSKKKSY (198 aa).

Belongs to the influenza viruses polymerase PB1 family. As to quaternary structure, influenza RNA polymerase is composed of three subunits: PB1, PB2 and PA. Interacts (via N-terminus) with PA (via C-terminus). Interacts (via C-terminus) with PB2 (via N-terminus); this interaction is essential for transcription initiation. Interacts (via C-terminus) with human PKP2 (via N-terminus); the interaction competitively inhibits the interaction between the RNA polymerase subunits PB1 and PB2. In terms of processing, phosphorylated by host PRKCA.

The protein resides in the host nucleus. The protein localises to the host cytoplasm. It carries out the reaction RNA(n) + a ribonucleoside 5'-triphosphate = RNA(n+1) + diphosphate. Functionally, RNA-dependent RNA polymerase which is responsible for replication and transcription of virus RNA segments. The transcription of viral mRNAs occurs by a unique mechanism called cap-snatching. 5' methylated caps of cellular mRNAs are cleaved after 10-13 nucleotides by PA. In turn, these short capped RNAs are used as primers by PB1 for transcription of viral mRNAs. During virus replication, PB1 initiates RNA synthesis and copy vRNA into complementary RNA (cRNA) which in turn serves as a template for the production of more vRNAs. This Aves (Human) protein is RNA-directed RNA polymerase catalytic subunit.